The primary structure comprises 466 residues: Ribulose bisphosphate carboxylase large chain (466 aa).

Lys5 carries the N6,N6,N6-trimethyllysine modification. Asn114 and Thr164 together coordinate substrate. The active-site Proton acceptor is Lys166. Residue Lys168 participates in substrate binding. Positions 192, 194, and 195 each coordinate Mg(2+). Lys192 bears the N6-carboxylysine mark. His285 (proton acceptor) is an active-site residue. Positions 286, 318, and 370 each coordinate substrate.

It belongs to the RuBisCO large chain family. Type I subfamily. In terms of assembly, heterohexadecamer of 8 large chains and 8 small chains. Requires Mg(2+) as cofactor.

The protein localises to the plastid. The protein resides in the chloroplast. It carries out the reaction 2 (2R)-3-phosphoglycerate + 2 H(+) = D-ribulose 1,5-bisphosphate + CO2 + H2O. It catalyses the reaction D-ribulose 1,5-bisphosphate + O2 = 2-phosphoglycolate + (2R)-3-phosphoglycerate + 2 H(+). Its function is as follows. RuBisCO catalyzes two reactions: the carboxylation of D-ribulose 1,5-bisphosphate, the primary event in carbon dioxide fixation, as well as the oxidative fragmentation of the pentose substrate in the photorespiration process. Both reactions occur simultaneously and in competition at the same active site. The protein is Ribulose bisphosphate carboxylase large chain of Lobelia sp.